We begin with the raw amino-acid sequence, 485 residues long: Glutamyl-tRNA(Gln) amidotransferase subunit A (485 aa).

Active-site charge relay system residues include lysine 78 and serine 153. The Acyl-ester intermediate role is filled by serine 177.

This sequence belongs to the amidase family. GatA subfamily. In terms of assembly, heterotrimer of A, B and C subunits.

It catalyses the reaction L-glutamyl-tRNA(Gln) + L-glutamine + ATP + H2O = L-glutaminyl-tRNA(Gln) + L-glutamate + ADP + phosphate + H(+). Its function is as follows. Allows the formation of correctly charged Gln-tRNA(Gln) through the transamidation of misacylated Glu-tRNA(Gln) in organisms which lack glutaminyl-tRNA synthetase. The reaction takes place in the presence of glutamine and ATP through an activated gamma-phospho-Glu-tRNA(Gln). This Geobacter metallireducens (strain ATCC 53774 / DSM 7210 / GS-15) protein is Glutamyl-tRNA(Gln) amidotransferase subunit A.